We begin with the raw amino-acid sequence, 96 residues long: Co-chaperonin GroES (96 aa).

Belongs to the GroES chaperonin family. In terms of assembly, heptamer of 7 subunits arranged in a ring. Interacts with the chaperonin GroEL.

It localises to the cytoplasm. In terms of biological role, together with the chaperonin GroEL, plays an essential role in assisting protein folding. The GroEL-GroES system forms a nano-cage that allows encapsulation of the non-native substrate proteins and provides a physical environment optimized to promote and accelerate protein folding. GroES binds to the apical surface of the GroEL ring, thereby capping the opening of the GroEL channel. The protein is Co-chaperonin GroES of Colwellia maris.